Reading from the N-terminus, the 283-residue chain is Elongation factor Ts (283 aa).

An involved in Mg(2+) ion dislocation from EF-Tu region spans residues 80-83; that stretch reads TDFV.

This sequence belongs to the EF-Ts family.

It localises to the cytoplasm. Associates with the EF-Tu.GDP complex and induces the exchange of GDP to GTP. It remains bound to the aminoacyl-tRNA.EF-Tu.GTP complex up to the GTP hydrolysis stage on the ribosome. The polypeptide is Elongation factor Ts (Salmonella paratyphi A (strain ATCC 9150 / SARB42)).